The following is a 150-amino-acid chain: Large ribosomal subunit protein uL13 (150 aa).

Positions 129–150 (PEHPHSAQRPQTLQLNPAASSQ) are disordered. The segment covering 136–150 (QRPQTLQLNPAASSQ) has biased composition (polar residues).

Belongs to the universal ribosomal protein uL13 family. As to quaternary structure, part of the 50S ribosomal subunit.

In terms of biological role, this protein is one of the early assembly proteins of the 50S ribosomal subunit, although it is not seen to bind rRNA by itself. It is important during the early stages of 50S assembly. The polypeptide is Large ribosomal subunit protein uL13 (Prochlorococcus marinus (strain MIT 9303)).